The chain runs to 450 residues: Chromosomal replication initiator protein DnaA (450 aa).

Positions 1–79 (MKDSYFDLNT…MEYAYDVAHD (79 aa)) are domain I, interacts with DnaA modulators. The tract at residues 79 to 112 (DFFKPELKVIKVVANPVNNQKSNQSNSDFVATDY) is domain II. The domain III, AAA+ region stretch occupies residues 113–329 (QLNQNFTFDT…GAFNTLTLMA (217 aa)). Residues glycine 157, glycine 159, lysine 160, and threonine 161 each coordinate ATP. Residues 330–450 (RAGRPINVSN…NLSTKIKEKS (121 aa)) are domain IV, binds dsDNA.

Belongs to the DnaA family. Oligomerizes as a right-handed, spiral filament on DNA at oriC.

Its subcellular location is the cytoplasm. Plays an essential role in the initiation and regulation of chromosomal replication. ATP-DnaA binds to the origin of replication (oriC) to initiate formation of the DNA replication initiation complex once per cell cycle. Binds the DnaA box (a 9 base pair repeat at the origin) and separates the double-stranded (ds)DNA. Forms a right-handed helical filament on oriC DNA; dsDNA binds to the exterior of the filament while single-stranded (ss)DNA is stabiized in the filament's interior. The ATP-DnaA-oriC complex binds and stabilizes one strand of the AT-rich DNA unwinding element (DUE), permitting loading of DNA polymerase. After initiation quickly degrades to an ADP-DnaA complex that is not apt for DNA replication. Binds acidic phospholipids. This chain is Chromosomal replication initiator protein DnaA, found in Oenococcus oeni (strain ATCC BAA-331 / PSU-1).